The following is a 23-amino-acid chain: Dahlein-4.3 (23 aa).

Expressed by the skin dorsal glands.

It is found in the secreted. Has no antimicrobial activity. This is Dahlein-4.3 from Ranoidea dahlii (Dahl's aquatic frog).